We begin with the raw amino-acid sequence, 327 residues long: Ribosomal RNA small subunit methyltransferase H (327 aa).

S-adenosyl-L-methionine contacts are provided by residues 37 to 39 (GGY), D55, F82, D99, and Q106. Residues 303–327 (IATRTDAPAQPVAPETLGLPQLEGF) form a disordered region.

The protein belongs to the methyltransferase superfamily. RsmH family.

It localises to the cytoplasm. It carries out the reaction cytidine(1402) in 16S rRNA + S-adenosyl-L-methionine = N(4)-methylcytidine(1402) in 16S rRNA + S-adenosyl-L-homocysteine + H(+). In terms of biological role, specifically methylates the N4 position of cytidine in position 1402 (C1402) of 16S rRNA. The polypeptide is Ribosomal RNA small subunit methyltransferase H (Jannaschia sp. (strain CCS1)).